We begin with the raw amino-acid sequence, 124 residues long: Orexigenic neuropeptide QRFP (124 aa).

Positions 1–17 (MRGFRPLLSLLLPLSAC) are cleaved as a signal peptide. The propeptide occupies 18-79 (FPLLDRRGPT…REHTGFRLGR (62 aa)). The segment at 63–101 (REQQASHREHTGFRLGRQDGSSEAAGFLPADSEKASGPL) is disordered. Phe122 carries the post-translational modification Phenylalanine amide.

This sequence belongs to the RFamide neuropeptide family. As to quaternary structure, ligand for the G-protein coupled receptor QRFPR/GPR103. In terms of tissue distribution, expressed in the brain with highest levels in the periventricular hypothalamic nucleus and lateral hypothalamic areas. Expressed at moderate levels in the adrenal gland, eye, heart, intestine, liver, lung, kidney, mesenteric lymph node, ovary, placenta, Peyer patches, skin, spleen, stomach, testis, thymus and uterus.

It localises to the secreted. Its function is as follows. Stimulates feeding and grooming behavior, metabolic rate and locomotor activity and increases blood pressure. May have orexigenic activity. May promote aldosterone secretion by the adrenal gland. This is Orexigenic neuropeptide QRFP from Mus musculus (Mouse).